The primary structure comprises 722 residues: DUF724 domain-containing protein 7 (722 aa).

The tract at residues 424–449 (KTTPKKKLQAMKNQKSSTNDSVGEKV) is disordered. Residues 434–444 (MKNQKSSTNDS) are compositionally biased toward polar residues. In terms of domain architecture, DUF724 spans 540–720 (VLPFVKKSQL…HEFQAILAAP (181 aa)). Residues 645–712 (CALEELKAVE…DQEVQNVDHE (68 aa)) adopt a coiled-coil conformation.

In terms of assembly, homodimer. Interacts wtih ABAP1, ARIA and LHP1. Interacts with the non-modified histones H1, H2B, H3 and H4. Expressed in roots, leaves, stems and flowers.

It is found in the nucleus. May act as a link between DNA replication, transcription and chromatin remodeling during flower development. May participate in the repression of LHP1-targeted genes during flower development by direct interaction with LHP1. May be involved in the polar growth of plant cells via transportation of RNAs. The polypeptide is DUF724 domain-containing protein 7 (Arabidopsis thaliana (Mouse-ear cress)).